The sequence spans 1876 residues: Vitellogenin-2 (1876 aa).

Positions 1–16 are cleaved as a signal peptide; sequence MMWKTLLCCLLAVSAA. Positions 21-838 constitute a Vitellogenin domain; the sequence is WEPGKRYEYH…SRDSFMPKSV (818 aa). 2 N-linked (GlcNAc...) asparagine glycosylation sites follow: Asn-211 and Asn-290. Positions 322–424 are disordered; it reads TGEPSQRDSA…SSSSSSEEYL (103 aa). Low complexity-rich tracts occupy residues 330 to 368 and 387 to 404; these read SAYA…SSSR and SQPR…SKRS. Residue Asn-409 is glycosylated (N-linked (GlcNAc...) asparagine). Positions 411-420 are enriched in low complexity; it reads SSSSSSSSSS. N-linked (GlcNAc...) asparagine glycosylation is found at Asn-595, Asn-631, Asn-932, Asn-1012, and Asn-1055. Residues 1192-1239 form a disordered region; that stretch reads SYDNRYTQPEEEEETRQHSKIRRPRSASRKHRRSRHEERAPLENLEVS. The span at 1209–1225 shows a compositional bias: basic residues; sequence HSKIRRPRSASRKHRRS. N-linked (GlcNAc...) asparagine glycosylation is found at Asn-1318, Asn-1398, Asn-1417, Asn-1424, Asn-1469, Asn-1532, Asn-1636, Asn-1719, Asn-1760, and Asn-1770. In terms of domain architecture, VWFD spans 1518–1703; it reads PTCVVDYSKV…TLVRDLDRSR (186 aa). An intrachain disulfide couples Cys-1520 to Cys-1664. Residues 1729–1788 are disordered; it reads SGIRPYDIDDDSSSSSSSSSSSSSSSSSSKSNSTSSSSSESNESALPRGENKLHRAQQPS. A compositionally biased stretch (low complexity) spans 1741–1772; the sequence is SSSSSSSSSSSSSSSSSKSNSTSSSSSESNES.

It localises to the secreted. In terms of biological role, precursor of the egg-yolk proteins that are sources of nutrients during embryonic development. This is Vitellogenin-2 (VG2) from Periplaneta americana (American cockroach).